A 186-amino-acid chain; its full sequence is MAGVTDVQRLQARLEELERWVYGPGGSRGSRKVADGLVKVQVALGNIASKRERVKILYKKIEDLIKYLDPEYMDRIAIPDASKLQFILAEEQFILSQVALLEQVEALVPMLDSAHIKAVPEHAARLQRLAQIHIQQQDQCVEITEESKALLEEYNKTTMLLSKQFVQWDELLCQLEAAKQVKPAEE.

Ala2 is modified (N-acetylalanine).

The protein belongs to the dynactin subunit 3 family. Subunit of dynactin, a multiprotein complex part of a tripartite complex with dynein and a adapter, such as BICDL1, BICD2 or HOOK3. The dynactin complex is built around ACTR1A/ACTB filament and consists of an actin-related filament composed of a shoulder domain, a pointed end and a barbed end. Its length is defined by its flexible shoulder domain. The soulder is composed of 2 DCTN1 subunits, 4 DCTN2 and 2 DCTN3. The 4 DCNT2 (via N-terminus) bind the ACTR1A filament and act as molecular rulers to determine the length. The pointed end is important for binding dynein-dynactin cargo adapters. Consists of 4 subunits: ACTR10, DCNT4, DCTN5 and DCTN6. The barbed end is composed of a CAPZA1:CAPZB heterodimers, which binds ACTR1A/ACTB filament and dynactin and stabilizes dynactin.

It localises to the cytoplasm. The protein localises to the cytoskeleton. The protein resides in the microtubule organizing center. It is found in the centrosome. Its subcellular location is the chromosome. It localises to the centromere. The protein localises to the kinetochore. The protein resides in the spindle. It is found in the cleavage furrow. Its subcellular location is the midbody. In terms of biological role, part of the dynactin complex that activates the molecular motor dynein for ultra-processive transport along microtubules. Together with dynein is involved in spindle assembly and cytokinesis. This Sus scrofa (Pig) protein is Dynactin subunit 3.